Reading from the N-terminus, the 366-residue chain is tRNA-specific 2-thiouridylase MnmA (366 aa).

ATP is bound by residues 10 to 17 and Ile-36; that span reads GLSGGVDS. Cys-98 acts as the Nucleophile in catalysis. Residues Cys-98 and Cys-194 are joined by a disulfide bond. Gly-122 contacts ATP. An interaction with tRNA region spans residues 144–146; it reads KDQ. Cys-194 (cysteine persulfide intermediate) is an active-site residue. An interaction with tRNA region spans residues 303 to 304; sequence RY.

Belongs to the MnmA/TRMU family.

The protein localises to the cytoplasm. It catalyses the reaction S-sulfanyl-L-cysteinyl-[protein] + uridine(34) in tRNA + AH2 + ATP = 2-thiouridine(34) in tRNA + L-cysteinyl-[protein] + A + AMP + diphosphate + H(+). Functionally, catalyzes the 2-thiolation of uridine at the wobble position (U34) of tRNA, leading to the formation of s(2)U34. The polypeptide is tRNA-specific 2-thiouridylase MnmA (Chlorobaculum tepidum (strain ATCC 49652 / DSM 12025 / NBRC 103806 / TLS) (Chlorobium tepidum)).